The following is a 494-amino-acid chain: Glutamate--tRNA ligase (494 aa).

The short motif at 9-19 (PSPTGDPHLGT) is the 'HIGH' region element. The 'KMSKS' region signature appears at 250 to 254 (KLSKR). Position 253 (lysine 253) interacts with ATP.

This sequence belongs to the class-I aminoacyl-tRNA synthetase family. Glutamate--tRNA ligase type 1 subfamily. As to quaternary structure, monomer.

It localises to the cytoplasm. It catalyses the reaction tRNA(Glu) + L-glutamate + ATP = L-glutamyl-tRNA(Glu) + AMP + diphosphate. In terms of biological role, catalyzes the attachment of glutamate to tRNA(Glu) in a two-step reaction: glutamate is first activated by ATP to form Glu-AMP and then transferred to the acceptor end of tRNA(Glu). This Pseudoalteromonas translucida (strain TAC 125) protein is Glutamate--tRNA ligase.